A 403-amino-acid polypeptide reads, in one-letter code: Argininosuccinate synthase (403 aa).

Residues 13-21 (AYSGGLDTS) and Ala40 each bind ATP. Tyr92 and Ser97 together coordinate L-citrulline. Gly122 provides a ligand contact to ATP. Thr124, Asn128, and Asp129 together coordinate L-aspartate. Asn128 lines the L-citrulline pocket. 5 residues coordinate L-citrulline: Arg132, Ser181, Ser190, Glu266, and Tyr278.

It belongs to the argininosuccinate synthase family. Type 1 subfamily. Homotetramer.

It is found in the cytoplasm. It catalyses the reaction L-citrulline + L-aspartate + ATP = 2-(N(omega)-L-arginino)succinate + AMP + diphosphate + H(+). The protein operates within amino-acid biosynthesis; L-arginine biosynthesis; L-arginine from L-ornithine and carbamoyl phosphate: step 2/3. In Aliivibrio fischeri (strain MJ11) (Vibrio fischeri), this protein is Argininosuccinate synthase.